We begin with the raw amino-acid sequence, 269 residues long: Mitochondrial scaffolding protein 1 (269 aa).

The 73-residue stretch at 49-121 (VVEIEKTSKG…HDEAVEVFRS (73 aa)) folds into the PDZ domain. The disordered stretch occupies residues 143 to 185 (RTQTPTASVSITPQVTPQTRSTQNNTDTPKSMSHSESKSRLTS). Residues 145–174 (QTPTASVSITPQVTPQTRSTQNNTDTPKSM) are compositionally biased toward polar residues. The helical transmembrane segment at 240 to 262 (WLTEALYVSIGLGALTISGYLAY) threads the bilayer.

It localises to the membrane. Functionally, plays a role in the regulation of lifespan in a partially daf-16-mediated manner, and may be involved in regulating the levels of reactive oxygen species production in response to heat stress. The protein is Mitochondrial scaffolding protein 1 of Caenorhabditis elegans.